Consider the following 630-residue polypeptide: YTH domain-containing family protein 1 (630 aa).

Disordered stretches follow at residues 38–113, 160–183, and 200–241; these read DMTQ…YMQQ, YYPQ…AGPY, and QVGD…QSGH. Residues 70–102 show a composition bias toward polar residues; sequence PGQQQQHQYGSPPNTNGNAQPMPQAHGNNTMNS. A YTH domain is found at 382–590; that stretch reads EKYFILKSLT…SVGRKLTGLF (209 aa).

Belongs to the YTHDF family. YTHDF1 subfamily.

The protein resides in the cytoplasm. It is found in the P-body. In terms of biological role, specifically recognizes and binds N6-methyladenosine (m6A)-containing mRNAs, and regulates their stability. M6A is a modification present at internal sites of mRNAs and some non-coding RNAs and plays a role in mRNA stability and processing. Plays a role in pathogenicity towards plant host. This is YTH domain-containing family protein 1 from Pyricularia oryzae (strain 70-15 / ATCC MYA-4617 / FGSC 8958) (Rice blast fungus).